Here is a 711-residue protein sequence, read N- to C-terminus: Ribosomal RNA large subunit methyltransferase K/L (711 aa).

The THUMP domain occupies 42–153 (DAQRAVLWSR…KGRATISVDL (112 aa)).

The protein belongs to the methyltransferase superfamily. RlmKL family.

Its subcellular location is the cytoplasm. It carries out the reaction guanosine(2445) in 23S rRNA + S-adenosyl-L-methionine = N(2)-methylguanosine(2445) in 23S rRNA + S-adenosyl-L-homocysteine + H(+). The enzyme catalyses guanosine(2069) in 23S rRNA + S-adenosyl-L-methionine = N(2)-methylguanosine(2069) in 23S rRNA + S-adenosyl-L-homocysteine + H(+). Its function is as follows. Specifically methylates the guanine in position 2445 (m2G2445) and the guanine in position 2069 (m7G2069) of 23S rRNA. The sequence is that of Ribosomal RNA large subunit methyltransferase K/L from Xanthomonas campestris pv. campestris (strain 8004).